Here is a 1939-residue protein sequence, read N- to C-terminus: Myosin-2 (1939 aa).

Residues 33 to 82 (DAKTSVFVAEPKESFVKGTIQSREGGKVTVKTEAGATLTVKEDQVFPMNP) enclose the Myosin N-terminal SH3-like domain. Phosphothreonine is present on residues Thr-64 and Thr-69. Positions 86 to 782 (DKIEDMAMMT…LLGLLEEMRD (697 aa)) constitute a Myosin motor domain. The residue at position 130 (Lys-130) is an N6,N6,N6-trimethyllysine. 179 to 186 (GESGAGKT) lines the ATP pocket. Tyr-389 is subject to Phosphotyrosine. Residue Ser-392 is modified to Phosphoserine. Thr-419 carries the phosphothreonine modification. A Phosphoserine modification is found at Ser-625. Positions 659–681 (LNKLMTNLRSTHPHFVRCIIPNE) are actin-binding. Pros-methylhistidine is present on His-757. Residues 761–775 (KFGHTKVFFKAGLLG) form an actin-binding region. The region spanning 785–814 (LAQLITRTQARCRGFLARVEYQKMVERRES) is the IQ domain. Residues 843–1939 (LLKSAESEKE…EVHTKVISEE (1097 aa)) are a coiled coil. Phosphoserine occurs at positions 1092 and 1096. 2 disordered regions span residues 1126–1147 (IEAERASRAKAEKQRSDLSREL) and 1153–1172 (RLEEAGGATSAQIEMNKKRE). Positions 1128–1147 (AERASRAKAEKQRSDLSREL) are enriched in basic and acidic residues. Ser-1162 and Ser-1237 each carry phosphoserine. Thr-1241 carries the post-translational modification Phosphothreonine. Ser-1243 carries the post-translational modification Phosphoserine. Thr-1255 bears the Phosphothreonine mark. Ser-1261 is modified (phosphoserine). Thr-1286 bears the Phosphothreonine mark. A phosphoserine mark is found at Ser-1288, Ser-1292, Ser-1303, and Ser-1306. Residue Tyr-1464 is modified to Phosphotyrosine. Position 1467 is a phosphothreonine (Thr-1467). Ser-1474 is modified (phosphoserine). Phosphotyrosine is present on Tyr-1492. The residue at position 1495 (Ser-1495) is a Phosphoserine. Thr-1501 carries the phosphothreonine modification. Phosphoserine is present on Ser-1514. At Thr-1517 the chain carries Phosphothreonine. A phosphoserine mark is found at Ser-1542, Ser-1554, Ser-1574, Ser-1600, Ser-1603, Ser-1714, and Ser-1726. Phosphothreonine occurs at positions 1730 and 1736. Position 1739 is a phosphoserine (Ser-1739). The segment at 1885–1915 (QAEEAEEQSNTNLSKFRKLQHELEEAEERAD) is disordered.

The protein belongs to the TRAFAC class myosin-kinesin ATPase superfamily. Myosin family. As to quaternary structure, muscle myosin is a hexameric protein that consists of 2 heavy chain subunits (MHC), 2 alkali light chain subunits (MLC) and 2 regulatory light chain subunits (MLC-2). Interacts with GCSAM.

It is found in the cytoplasm. The protein resides in the myofibril. In terms of biological role, myosins are actin-based motor molecules with ATPase activity essential for muscle contraction. This is Myosin-2 (MYH2) from Sus scrofa (Pig).